A 1242-amino-acid chain; its full sequence is Insulin receptor substrate 1 (1242 aa).

Ser-3 carries the phosphoserine modification. The tract at residues Ser-3–Ser-137 is mediates interaction with PHIP. The PH domain maps to Asp-12–Asn-115. Ser-99 is modified (phosphoserine; by CK2). The region spanning Phe-160–Phe-264 is the IRS-type PTB domain. The disordered stretch occupies residues Asp-262–Glu-430. Low complexity predominate over residues Lys-269–Ser-281. A phosphoserine; by RPS6KB1 mark is found at Ser-270 and Ser-307. Position 312 is a phosphoserine; by IKKB, MAPK8 and RPS6KB1 (Ser-312). A phosphoserine mark is found at Ser-315, Ser-323, Ser-330, Ser-345, and Ser-348. Positions Thr-354 to Ala-363 are enriched in basic residues. Low complexity-rich tracts occupy residues Ser-383 to Ser-404 and Ser-412 to Gly-424. Ser-419 bears the Phosphoserine mark. A phosphothreonine mark is found at Thr-446 and Thr-453. The residue at position 465 (Tyr-465) is a Phosphotyrosine; by INSR. The short motif at Tyr-465–Met-468 is the YXXM motif 1 element. Residue Ser-527 is modified to Phosphoserine; by RPS6KB1. The short motif at Tyr-551–Met-554 is the YXXM motif 2 element. Positions Leu-592 to Asp-610 are enriched in basic and acidic residues. The segment at Leu-592–Ser-616 is disordered. Tyr-612 carries the phosphotyrosine; by INSR modification. Residues Tyr-612–Met-615 carry the YXXM motif 3 motif. 2 positions are modified to phosphoserine: Ser-616 and Ser-629. A Phosphotyrosine; by INSR modification is found at Tyr-632. Residues Tyr-632 to Met-635 carry the YXXM motif 4 motif. Ser-636 is modified (phosphoserine; by RPS6KB1). Tyr-662 is modified (phosphotyrosine). The YXXM motif 5 signature appears at Tyr-662–Met-665. The interval Ser-668–Thr-693 is disordered. The YXXM motif 6 signature appears at Tyr-732 to Met-735. Disordered stretches follow at residues Phe-771–Glu-900 and Ser-918–Gly-937. The span at Arg-776–Arg-785 shows a compositional bias: basic and acidic residues. Phosphoserine; by AMPK and SIK2 is present on Ser-794. The span at Ala-801–Ser-815 shows a compositional bias: low complexity. Ser-892 bears the Phosphoserine mark. A Phosphotyrosine; by INSR modification is found at Tyr-896. The GRB2-binding stretch occupies residues Tyr-896–Asn-898. Over residues Ser-918–Gln-928 the composition is skewed to polar residues. Tyr-941 and Tyr-989 each carry phosphotyrosine; by INSR. 3 consecutive short sequence motifs (YXXM motif) follow at residues Tyr-941–Met-944, Tyr-989–Met-992, and Tyr-1012–Met-1015. Positions Ser-1057 to Phe-1146 are disordered. Residues Thr-1073–Ala-1085 show a composition bias toward polar residues. Position 1100 is a phosphoserine (Ser-1100). Ser-1101 bears the Phosphoserine; by RPS6KB1 and PKC/PRKCQ mark. Positions Glu-1102–Gly-1114 are enriched in polar residues. Tyr-1179 carries the post-translational modification Phosphotyrosine; by INSR. Residues Lys-1186 and Lys-1189 each participate in a glycyl lysine isopeptide (Lys-Gly) (interchain with G-Cter in ubiquitin) cross-link. Residues Gln-1190 to Gln-1242 form a disordered region. The span at Glu-1198–Gln-1209 shows a compositional bias: pro residues. The segment covering Pro-1210–Arg-1220 has biased composition (low complexity). Phosphotyrosine; by INSR is present on Tyr-1229.

As to quaternary structure, interacts with UBTF and PIK3CA. Interacts (via phosphorylated YXXM motifs) with PIK3R1. Interacts with ROCK1 and FER. Interacts (via PH domain) with PHIP. Interacts with GRB2. Interacts with SOCS7. Interacts (via IRS-type PTB domain) with IGF1R and INSR (via the tyrosine-phosphorylated NPXY motif). Interacts with ALK. Interacts with EIF2AK2/PKR. Interacts with GKAP1. Interacts with DGKZ in the absence of insulin; insulin stimulation decreases this interaction. Found in a ternary complex with DGKZ and PIP5K1A in the absence of insulin stimulation. Interacts with SQSTM1; the interaction is disrupted by the presence of tensin TNS2. Interacts with NCK1 (via SH2 domain). Interacts with NCK2 (via SH3 domain). Interacts with SH2B1; this interaction enhances leptin-induced activation of the PI3-kinase pathway. Interacts with DVL2; this interaction promotes the Wnt/beta-catenin signaling pathway. In terms of processing, serine phosphorylation of IRS1 is a mechanism for insulin resistance. Ser-307, Ser-312, Ser-315, and Ser-323 phosphorylations inhibit insulin action through disruption of IRS1 interaction with the insulin receptor INSR. Phosphorylation of Tyr-896 is required for GRB2-binding. Phosphorylated by ALK. Phosphorylated at Ser-270, Ser-307, Ser-636 and Ser-1101 by RPS6KB1; phosphorylation induces accelerated degradation of IRS1. Phosphorylated on tyrosine residues in response to insulin. In skeletal muscles, dephosphorylated on Tyr-612 by TNS2 under anabolic conditions; dephosphorylation results in the proteasomal degradation of IRS1. Ubiquitinated by the Cul7-RING(FBXW8) complex in a mTOR-dependent manner, leading to its degradation: the Cul7-RING(FBXW8) complex recognizes and binds IRS1 previously phosphorylated by S6 kinase (RPS6KB1 or RPS6KB2). Ubiquitinated by TRAF4 through 'Lys-29' linkage; this ubiquitination regulates the interaction of IRS1 with IGFR and IRS1 tyrosine phosphorylation upon IGF1 stimulation. Post-translationally, S-nitrosylation at by BLVRB inhibits its activity.

It is found in the cytoplasm. Its subcellular location is the nucleus. Functionally, signaling adapter protein that participates in the signal transduction from two prominent receptor tyrosine kinases, insulin receptor/INSR and insulin-like growth factor I receptor/IGF1R. Plays therefore an important role in development, growth, glucose homeostasis as well as lipid metabolism. Upon phosphorylation by the insulin receptor, functions as a signaling scaffold that propagates insulin action through binding to SH2 domain-containing proteins including the p85 regulatory subunit of PI3K, NCK1, NCK2, GRB2 or SHP2. Recruitment of GRB2 leads to the activation of the guanine nucleotide exchange factor SOS1 which in turn triggers the Ras/Raf/MEK/MAPK signaling cascade. Activation of the PI3K/AKT pathway is responsible for most of insulin metabolic effects in the cell, and the Ras/Raf/MEK/MAPK is involved in the regulation of gene expression and in cooperation with the PI3K pathway regulates cell growth and differentiation. Acts a positive regulator of the Wnt/beta-catenin signaling pathway through suppression of DVL2 autophagy-mediated degradation leading to cell proliferation. The chain is Insulin receptor substrate 1 (IRS1) from Homo sapiens (Human).